Here is a 251-residue protein sequence, read N- to C-terminus: Cytochrome c oxidase subunit 2 (251 aa).

2 helical membrane passes run 42–62 (NIMFYLFIILGLVSWMLFTIV) and 83–103 (IIWTMFPAVILLIIAFPSFIL). Residues histidine 186, cysteine 221, glutamate 223, cysteine 225, histidine 229, and methionine 232 each contribute to the Cu cation site. Residue glutamate 223 participates in Mg(2+) binding.

Belongs to the cytochrome c oxidase subunit 2 family. In terms of assembly, component of the cytochrome c oxidase (complex IV, CIV), a multisubunit enzyme composed of a catalytic core of 3 subunits and several supernumerary subunits. The complex exists as a monomer or a dimer and forms supercomplexes (SCs) in the inner mitochondrial membrane with ubiquinol-cytochrome c oxidoreductase (cytochrome b-c1 complex, complex III, CIII). Cu cation serves as cofactor.

It localises to the mitochondrion inner membrane. It catalyses the reaction 4 Fe(II)-[cytochrome c] + O2 + 8 H(+)(in) = 4 Fe(III)-[cytochrome c] + 2 H2O + 4 H(+)(out). In terms of biological role, component of the cytochrome c oxidase, the last enzyme in the mitochondrial electron transport chain which drives oxidative phosphorylation. The respiratory chain contains 3 multisubunit complexes succinate dehydrogenase (complex II, CII), ubiquinol-cytochrome c oxidoreductase (cytochrome b-c1 complex, complex III, CIII) and cytochrome c oxidase (complex IV, CIV), that cooperate to transfer electrons derived from NADH and succinate to molecular oxygen, creating an electrochemical gradient over the inner membrane that drives transmembrane transport and the ATP synthase. Cytochrome c oxidase is the component of the respiratory chain that catalyzes the reduction of oxygen to water. Electrons originating from reduced cytochrome c in the intermembrane space (IMS) are transferred via the dinuclear copper A center (CU(A)) of subunit 2 and heme A of subunit 1 to the active site in subunit 1, a binuclear center (BNC) formed by heme A3 and copper B (CU(B)). The BNC reduces molecular oxygen to 2 water molecules using 4 electrons from cytochrome c in the IMS and 4 protons from the mitochondrial matrix. In Candida glabrata (strain ATCC 2001 / BCRC 20586 / JCM 3761 / NBRC 0622 / NRRL Y-65 / CBS 138) (Yeast), this protein is Cytochrome c oxidase subunit 2 (COX2).